The chain runs to 33 residues: Dermaseptin-H8 (33 aa).

L33 is modified (leucine amide).

In terms of tissue distribution, expressed by the skin glands.

It localises to the secreted. In terms of biological role, has antimicrobial activity. The chain is Dermaseptin-H8 from Pithecopus hypochondrialis (Orange-legged leaf frog).